The sequence spans 488 residues: MTFNNKTIEELHNLLVSKEISATELTQATLENIKSREEALNSFVTIAEEQALVQAKAIDEAGIDADNVLSGIPLAVKDNISTDGILTTAASKMLYNYEPIFDATAVANAKTKGMIVVGKTNMDEFAMGGSGETSHYGATKNAWDHSKVPGGSSSGSAAAVASGQVRLSLGSDTGGSIRQPAAFNGIVGLKPTYGTVSRFGLIAFGSSLDQIGPFAPTVKENALLLNAIASEDAKDSTSAPVRIADFTSKIGQDIKGMKIALPKEYLGEGIDPEVKETILNAAKHFEKLGAIVEEVSLPHSKYGVAVYYIIASSEASSNLQRFDGIRYGYRAEDATNLDEIYVNSRSQGFGEEVKRRIMLGTFSLSSGYYDAYYKKAGQVRTLIIQDFEKVFADYDLILGPTAPSVAYDLDSLNHDPVAMYLADLLTIPVNLAGLPGISIPAGFSQGLPVGLQLIGPKHSEETIYQVAAAFEATTGYHKQQPVIFGGDN.

Catalysis depends on charge relay system residues Lys77 and Ser152. Residue Ser176 is the Acyl-ester intermediate of the active site.

The protein belongs to the amidase family. GatA subfamily. As to quaternary structure, heterotrimer of A, B and C subunits.

It catalyses the reaction L-glutamyl-tRNA(Gln) + L-glutamine + ATP + H2O = L-glutaminyl-tRNA(Gln) + L-glutamate + ADP + phosphate + H(+). Functionally, allows the formation of correctly charged Gln-tRNA(Gln) through the transamidation of misacylated Glu-tRNA(Gln) in organisms which lack glutaminyl-tRNA synthetase. The reaction takes place in the presence of glutamine and ATP through an activated gamma-phospho-Glu-tRNA(Gln). The polypeptide is Glutamyl-tRNA(Gln) amidotransferase subunit A (Streptococcus pneumoniae (strain ATCC 700669 / Spain 23F-1)).